The sequence spans 113 residues: U11-theraphotoxin-Hhn1d (113 aa).

The signal sequence occupies residues 1–21; that stretch reads MNTVRVTFLLVFVVAVSLGQA. A propeptide spanning residues 22–74 is cleaved from the precursor; that stretch reads DKDENRMEMKDKTEQGKSYLHFAENLLLQKLEDVEAKLLEKDSEKSINSRQKR. Disulfide bonds link Cys75–Cys90, Cys82–Cys95, and Cys89–Cys110.

It belongs to the neurotoxin 14 (magi-1) family. 01 (HNTX-16) subfamily. Expressed by the venom gland.

The protein localises to the secreted. Probable ion channel inhibitor. This is U11-theraphotoxin-Hhn1d from Cyriopagopus hainanus (Chinese bird spider).